We begin with the raw amino-acid sequence, 305 residues long: UDP-N-acetylenolpyruvoylglucosamine reductase 2 (305 aa).

Residues 33–197 (VGGKADVFVA…LEARFELEEG (165 aa)) form the FAD-binding PCMH-type domain. Residue R176 is part of the active site. Catalysis depends on S226, which acts as the Proton donor. Residue E296 is part of the active site.

The protein belongs to the MurB family. FAD is required as a cofactor.

The protein localises to the cytoplasm. The enzyme catalyses UDP-N-acetyl-alpha-D-muramate + NADP(+) = UDP-N-acetyl-3-O-(1-carboxyvinyl)-alpha-D-glucosamine + NADPH + H(+). Its pathway is cell wall biogenesis; peptidoglycan biosynthesis. Functionally, cell wall formation. This chain is UDP-N-acetylenolpyruvoylglucosamine reductase 2, found in Bacillus cereus (strain ATCC 10987 / NRS 248).